Consider the following 77-residue polypeptide: U8-lycotoxin-Ls1v (77 aa).

An N-terminal signal peptide occupies residues 1 to 20; the sequence is MKLIIFTGLVLFGIVSLIEA. A propeptide spanning residues 21–26 is cleaved from the precursor; sequence QAENEK.

Belongs to the neurotoxin 19 (CSTX) family. 08 (U8-Lctx) subfamily. Post-translationally, contains 4 disulfide bonds. Expressed by the venom gland.

Its subcellular location is the secreted. This Lycosa singoriensis (Wolf spider) protein is U8-lycotoxin-Ls1v.